The sequence spans 149 residues: Calmodulin (149 aa).

An N-acetylalanine modification is found at alanine 2. EF-hand domains follow at residues 8 to 43 (EQIA…LGQN), 44 to 79 (PTEA…KMKD), 81 to 116 (DTEE…LGEK), and 117 to 149 (LTDE…MMAK). The Ca(2+) site is built by aspartate 21, aspartate 23, aspartate 25, threonine 27, glutamate 32, aspartate 57, aspartate 59, asparagine 61, threonine 63, glutamate 68, aspartate 94, aspartate 96, asparagine 98, and glutamate 105. At lysine 116 the chain carries N6,N6,N6-trimethyllysine. Residues aspartate 130, aspartate 132, aspartate 134, histidine 136, and glutamate 141 each contribute to the Ca(2+) site.

The protein belongs to the calmodulin family.

Calmodulin mediates the control of a large number of enzymes, ion channels and other proteins by Ca(2+). Among the enzymes to be stimulated by the calmodulin-Ca(2+) complex are a number of protein kinases and phosphatases. The chain is Calmodulin from Tetrahymena pyriformis.